The following is a 1079-amino-acid chain: Extracellular calcium-sensing receptor (1079 aa).

The signal sequence occupies residues 1-19 (MAWFGYCLALLALTWHSSA). Residues 20 to 610 (YGPDQRAQKK…KEIEFLAWTE (591 aa)) are Extracellular-facing. Residues 22-188 (PDQRAQKKGD…QFKSFLRTIP (167 aa)) form a ligand-binding 1 (LB1) region. A disulfide bond links Cys60 and Cys101. Residue 66–70 (RGFRW) participates in phosphate binding. Ile81, Ser84, Leu87, and Leu88 together coordinate Ca(2+). Residue Asn90 is glycosylated (N-linked (GlcNAc...) asparagine). Position 100 (Thr100) interacts with Ca(2+). N-linked (GlcNAc...) asparagine glycosylation is present at Asn130. Thr145 is a binding site for Ca(2+). Residues Ser147, Ala168, and Ser170 each contribute to the L-tryptophan site. Ser170, Pro188, Asp190, Glu231, and Asp234 together coordinate Ca(2+). Residues 189–324 (NDEHQATAMA…GGTIGFGLKA (136 aa)) form a ligand-binding 2 (LB2) region. 7 cysteine pairs are disulfide-bonded: Cys236–Cys561, Cys358–Cys395, Cys437–Cys449, Cys542–Cys562, Cys546–Cys565, Cys568–Cys582, and Cys585–Cys598. Residues Asp238 and Ser240 each contribute to the spermine site. N-linked (GlcNAc...) asparagine glycans are attached at residues Asn261 and Asn287. Glu297 contributes to the Ca(2+) binding site. Glu297 contacts L-tryptophan. Residue Asn386 is glycosylated (N-linked (GlcNAc...) asparagine). 415-417 (RIS) provides a ligand contact to phosphate. 3 N-linked (GlcNAc...) asparagine glycosylation sites follow: Asn446, Asn468, and Asn488. A Ca(2+)-binding site is contributed by Tyr489. Asn541 carries N-linked (GlcNAc...) asparagine glycosylation. A cysteine-rich (CR) region spans residues 542-612 (CSRDCQAGTR…IEFLAWTEPF (71 aa)). Ca(2+) is bound at residue Gly557. N-linked (GlcNAc...) asparagine glycosylation occurs at Asn594. The helical transmembrane segment at 611–636 (PFGIALTLFAVLGIFLTAFVLGVFIK) threads the bilayer. The Cytoplasmic portion of the chain corresponds to 637–648 (FRNTPIVKATNR). Residues 637 to 648 (FRNTPIVKATNR) are intracellular loop 1 (ICL1). A helical transmembrane segment spans residues 649–668 (ELSYLLLFSLLCCFSSSLFF). Residues 669 to 674 (IGEPQD) are Extracellular-facing. A helical transmembrane segment spans residues 675–698 (WTCRLRQPAFGISFVLCISCILVK). Residues 699 to 722 (TNRVLLVFEAKIPTSFHRKWWGLN) are Cytoplasmic-facing. The intracellular loop 2 (ICL2) stretch occupies residues 699 to 722 (TNRVLLVFEAKIPTSFHRKWWGLN). A helical membrane pass occupies residues 723–745 (LQFLLVFLCTFMQIVICIIWLYT). Residues 746–769 (APPSSYRNHELEDEIIFITCHEGS) are Extracellular-facing. The chain crosses the membrane as a helical span at residues 770–789 (LMALGSLIGYTCLLAAICFF). The Cytoplasmic portion of the chain corresponds to 790 to 805 (FAFKSRKLPENFNEAK). The tract at residues 790–805 (FAFKSRKLPENFNEAK) is intracellular loop 3 (ICL3). Residues 806 to 828 (FITFSMLIFFIVWISFIPAYAST) traverse the membrane as a helical segment. Residues 829–832 (YGKF) lie on the Extracellular side of the membrane. A helical transmembrane segment spans residues 833-854 (VSAVEVIAILAASFGLLACIFF). Topologically, residues 855-1079 (NKVYIILFKP…SSVTENILHS (225 aa)) are cytoplasmic. The tract at residues 855–1079 (NKVYIILFKP…SSVTENILHS (225 aa)) is C-terminus. Residues 880–900 (AFKVAARATLRRPNISRKRSS) form an interaction with RNF19A region. At Thr888 the chain carries Phosphothreonine. The tract at residues 890-898 (RRPNISRKR) is arginine-rich retention motif. The segment at 894–964 (ISRKRSSSLG…QQQPQQPRCK (71 aa)) is disordered. Residue Ser899 is modified to Phosphoserine. A compositionally biased stretch (low complexity) spans 900-918 (SSLGGSTGSIPSSSISSKS). Basic and acidic residues predominate over residues 919–931 (NSEDRFPQPERQK). Ser920 is modified (phosphoserine). The span at 932–961 (QQQPLALTQQEQQQQPLTLQPQQQQQPQQP) shows a compositional bias: low complexity. Ser1062 is modified (phosphoserine).

It belongs to the G-protein coupled receptor 3 family. Homodimer; disulfide-linked. Interacts with VCP. Interacts with ARRB1. In terms of processing, phosphorylation at Thr-888 by PKC impairs coupling with G(q)/G(11) G-proteins, while it does not affect G(i)/G(o)-coupling. Phosphorylation at Ser-899 by PKA promote plasma membrane localization. Ubiquitinated by RNF19A; which induces proteasomal degradation. As to expression, epidermis, kidney and cartilage.

It is found in the cell membrane. Its activity is regulated as follows. In resting state, adopts an open conformation, anion-binding promoting the inactive configuration. Upon aromatic amino acid-binding, the groove in the extracellular venus flytrap module is closed, thereby inducing the formation of a novel homodimer interface between subunits. Calcium ions stabilize the active state by enhancing homodimer interactions between membrane-proximal domains to fully activate the receptor. Upon activation, the homodimer adopts an asymmetric configuration of the 7-transmembrane region that primes one protomer for G-protein coupling. G-protein binding expands the transmembrane dimer interface; the restriction imposed by the receptor dimer, in combination with intracellular loop 2 (ICL2), enables G-protein activation by facilitating conformational transition of G-protein alpha. Coupling to different classes of G-proteins results in distinct CASR-G-protein interfaces. Its function is as follows. G-protein-coupled receptor that senses changes in the extracellular concentration of calcium ions and plays a key role in maintaining calcium homeostasis. Senses fluctuations in the circulating calcium concentration: activated by elevated circulating calcium, leading to decreased parathyroid hormone (PTH) secretion in parathyroid glands. In kidneys, acts as a key regulator of renal tubular calcium resorption. Ligand binding causes a conformation change that triggers signaling via guanine nucleotide-binding proteins (G-proteins) and modulates the activity of downstream effectors. CASR is coupled with different G(q)/G(11), G(i)/G(o)- or G(s)-classes of G-proteins depending on the context. In the parathyroid and kidney, CASR signals through G(q)/G(11) and G(i)/G(o) G-proteins: G(q)/G(11) coupling activates phospholipase C-beta, releasing diacylglycerol (DAG) and inositol 1,4,5-trisphosphate (IP3) second messengers, while G(i)/G(o) coupling mediates inhibition of adenylate cyclase activity. The G-protein-coupled receptor activity is activated by a co-agonist mechanism: aromatic amino acids, such as Trp or Phe, act concertedly with divalent cations, such as calcium or magnesium, to achieve full receptor activation. Acts as an activator of the NLRP3 inflammasome via G(i)/G(o)-mediated signaling: down-regulation of cyclic AMP (cAMP) relieving NLRP3 inhibition by cAMP. Acts as a regulator of proton-sensing receptor GPR68 in a seesaw manner: CASR-mediated signaling inhibits GPR68 signaling in response to extracellular calcium, while GPR68 inhibits CASR in presence of extracellular protons. This Mus musculus (Mouse) protein is Extracellular calcium-sensing receptor.